Reading from the N-terminus, the 381-residue chain is Methanesulfonate monooxygenase (381 aa).

This sequence belongs to the SsuD family.

It carries out the reaction an alkanesulfonate + FMNH2 + O2 = an aldehyde + FMN + sulfite + H2O + 2 H(+). Catalyzes the desulfonation of aliphatic sulfonates. Shows highest activity with methanesulfonate. The polypeptide is Methanesulfonate monooxygenase (msuD) (Pseudomonas aeruginosa (strain ATCC 15692 / DSM 22644 / CIP 104116 / JCM 14847 / LMG 12228 / 1C / PRS 101 / PAO1)).